A 955-amino-acid polypeptide reads, in one-letter code: Glycine dehydrogenase (decarboxylating) (955 aa).

Position 702 is an N6-(pyridoxal phosphate)lysine (K702).

It belongs to the GcvP family. The glycine cleavage system is composed of four proteins: P, T, L and H. It depends on pyridoxal 5'-phosphate as a cofactor.

It carries out the reaction N(6)-[(R)-lipoyl]-L-lysyl-[glycine-cleavage complex H protein] + glycine + H(+) = N(6)-[(R)-S(8)-aminomethyldihydrolipoyl]-L-lysyl-[glycine-cleavage complex H protein] + CO2. Functionally, the glycine cleavage system catalyzes the degradation of glycine. The P protein binds the alpha-amino group of glycine through its pyridoxal phosphate cofactor; CO(2) is released and the remaining methylamine moiety is then transferred to the lipoamide cofactor of the H protein. This Bordetella avium (strain 197N) protein is Glycine dehydrogenase (decarboxylating).